The primary structure comprises 438 residues: Probable tRNA pseudouridine synthase D (438 aa).

The active-site Nucleophile is Asp-86. Positions 165 to 390 (GVPNFFGIQR…SKGTRRELLL (226 aa)) constitute a TRUD domain.

It belongs to the pseudouridine synthase TruD family.

It catalyses the reaction uridine(13) in tRNA = pseudouridine(13) in tRNA. Its function is as follows. Could be responsible for synthesis of pseudouridine from uracil-13 in transfer RNAs. This is Probable tRNA pseudouridine synthase D from Methanosarcina barkeri (strain Fusaro / DSM 804).